Here is a 111-residue protein sequence, read N- to C-terminus: Rho GDP-dissociation inhibitor 1 (111 aa).

Glycyl lysine isopeptide (Lys-Gly) (interchain with G-Cter in SUMO1); alternate cross-links involve residues Lys-57 and Lys-60. Glycyl lysine isopeptide (Lys-Gly) (interchain with G-Cter in SUMO2); alternate cross-links involve residues Lys-57 and Lys-60. N6-acetyllysine; alternate is present on Lys-60. Position 60 is an N6-succinyllysine; alternate (Lys-60).

It belongs to the Rho GDI family. Monomer. Interacts with FER. Interacts with PLXNB3. Forms a heterodimer with RAC1. Interacts with RHOA, the affinity is increased by three orders of magnitude when RHOA is prenylated. Interacts with PSMD10; the interaction increases ARHGDIA association with RHOA, leading to ARHGDIA-mediated inactivation of RHOA and ROCK and prolonged AKT activation. Interacts with KANK2; the interaction is direct and may regulate the interaction of ARHGDIA with RHOA, RAC1 and CDC42. Interacts with RHOC. Interacts with CDC42. Interacts with NGFR (via death domain); NGFR binding decreases the affinity for RHOA. Post-translationally, the N-terminus is blocked.

It localises to the cytoplasm. Controls Rho proteins homeostasis. Regulates the GDP/GTP exchange reaction of the Rho proteins by inhibiting the dissociation of GDP from them, and the subsequent binding of GTP to them. Retains Rho proteins such as CDC42, RAC1 and RHOA in an inactive cytosolic pool, regulating their stability and protecting them from degradation. Actively involved in the recycling and distribution of activated Rho GTPases in the cell, mediates extraction from membranes of both inactive and activated molecules due its exceptionally high affinity for prenylated forms. Through the modulation of Rho proteins, may play a role in cell motility regulation. In glioma cells, inhibits cell migration and invasion by mediating the signals of SEMA5A and PLXNB3 that lead to inactivation of RAC1. This is Rho GDP-dissociation inhibitor 1 (ARHGDIA) from Cavia porcellus (Guinea pig).